A 283-amino-acid chain; its full sequence is 4-diphosphocytidyl-2-C-methyl-D-erythritol kinase (283 aa).

Residue K10 is part of the active site. 95–105 (PVAAGLGGGSS) contacts ATP. Residue D137 is part of the active site.

Belongs to the GHMP kinase family. IspE subfamily.

It carries out the reaction 4-CDP-2-C-methyl-D-erythritol + ATP = 4-CDP-2-C-methyl-D-erythritol 2-phosphate + ADP + H(+). It participates in isoprenoid biosynthesis; isopentenyl diphosphate biosynthesis via DXP pathway; isopentenyl diphosphate from 1-deoxy-D-xylulose 5-phosphate: step 3/6. Catalyzes the phosphorylation of the position 2 hydroxy group of 4-diphosphocytidyl-2C-methyl-D-erythritol. This chain is 4-diphosphocytidyl-2-C-methyl-D-erythritol kinase, found in Limosilactobacillus reuteri (strain DSM 20016) (Lactobacillus reuteri).